The following is a 145-amino-acid chain: uncharacterized protein (145 aa).

This is an uncharacterized protein from Synechocystis sp. (strain ATCC 27184 / PCC 6803 / Kazusa).